A 227-amino-acid polypeptide reads, in one-letter code: 7-cyano-7-deazaguanine synthase (227 aa).

8-18 (LSGGTDSATVL) lines the ATP pocket. Zn(2+) contacts are provided by Cys192, Cys202, Cys205, and Cys208.

Belongs to the QueC family. Zn(2+) is required as a cofactor.

It catalyses the reaction 7-carboxy-7-deazaguanine + NH4(+) + ATP = 7-cyano-7-deazaguanine + ADP + phosphate + H2O + H(+). The protein operates within purine metabolism; 7-cyano-7-deazaguanine biosynthesis. In terms of biological role, catalyzes the ATP-dependent conversion of 7-carboxy-7-deazaguanine (CDG) to 7-cyano-7-deazaguanine (preQ(0)). This is 7-cyano-7-deazaguanine synthase from Rickettsia prowazekii (strain Madrid E).